A 213-amino-acid polypeptide reads, in one-letter code: Ribosomal RNA small subunit methyltransferase G (213 aa).

S-adenosyl-L-methionine is bound by residues glycine 72, phenylalanine 77, 125 to 126 (IE), and arginine 141.

The protein belongs to the methyltransferase superfamily. RNA methyltransferase RsmG family.

It is found in the cytoplasm. It catalyses the reaction guanosine(527) in 16S rRNA + S-adenosyl-L-methionine = N(7)-methylguanosine(527) in 16S rRNA + S-adenosyl-L-homocysteine. In terms of biological role, specifically methylates the N7 position of guanine in position 527 of 16S rRNA. The chain is Ribosomal RNA small subunit methyltransferase G from Sinorhizobium medicae (strain WSM419) (Ensifer medicae).